Reading from the N-terminus, the 836-residue chain is V-type proton ATPase subunit C (836 aa).

Residues 116 to 144 (LSLRHQRKHQHTHHQNKPQHYHHHHHHHQ) show a composition bias toward basic residues. Disordered stretches follow at residues 116–169 (LSLR…ASAP), 302–403 (APTT…SVQS), 415–453 (KPKR…QNHN), and 496–544 (PSQL…PLSP). The span at 160 to 169 (ATPPAPASAP) shows a compositional bias: pro residues. The span at 302-316 (APTTSSSVHSSMSRS) shows a compositional bias: low complexity. 2 stretches are compositionally biased toward polar residues: residues 319-348 (KRLN…HLAT) and 364-374 (TNPLQSPVQKS). Residues 425 to 450 (AQQQHETAQLQHQQTTQQHATPLTPQ) show a composition bias toward low complexity. Polar residues predominate over residues 496–511 (PSQLNINNGFNLTPTH). Over residues 512 to 529 (RSSPVSSCCGSSSQGRSS) the composition is skewed to low complexity.

Belongs to the V-ATPase C subunit family. In terms of assembly, V-ATPase is a heteromultimeric enzyme made up of two complexes: the ATP-hydrolytic V1 complex and the proton translocation V0 complex. The V1 complex consists of three catalytic AB heterodimers that form a heterohexamer, three peripheral stalks each consisting of EG heterodimers, one central rotor including subunits D and F, and the regulatory subunits C and H. The proton translocation complex V0 consists of the proton transport subunit a, a ring of proteolipid subunits c9c'', rotary subunit d, subunits e and f, and the accessory subunits VhaAC45 and ATP6AP2. In terms of tissue distribution, in larvae, expressed in the ring gland, CNS, imaginal disks and lymph gland.

Functionally, subunit of the V1 complex of vacuolar(H+)-ATPase (V-ATPase), a multisubunit enzyme composed of a peripheral complex (V1) that hydrolyzes ATP and a membrane integral complex (V0) that translocates protons. V-ATPase is responsible for acidifying and maintaining the pH of intracellular compartments and in some cell types, is targeted to the plasma membrane, where it is responsible for acidifying the extracellular environment. Subunit C is necessary for the assembly of the catalytic sector of the enzyme and is likely to have a specific function in its catalytic activity. In enterocytes, acts as part of a pHCl-2 sensory pathway which mediates Tor-dependent larval growth and metabolism in response to zinc availability. Likely acts in maintaining enterocyte lysosomal acidification which consequently promotes Tor activation at the lysosome membrane. This is V-type proton ATPase subunit C (Vha44) from Drosophila melanogaster (Fruit fly).